A 274-amino-acid chain; its full sequence is MPHRRSAYFVSDRTGITAESLGNALLTQFDMLEFKRETIPFIDTADKAMAVAEQIRQRAQSDHFRPLVFVSIVNPFVREAIQVDDCAMVIDFFHAFVGQLENELEQKATLTVGKSHGIISEEKYDTRIEAVNFSLNHDDGVKLKDLAEADVILVGVSRSGKTPTCLYLALQYGIKAANYPLTPEDLDSPTLPKMLLPYRKKIFGLTIEPQRLHHIRNERKPDSRYASIDNCRREVNEAESLFRHHGVPFISTTHKSIEEIASTILHHTGISRRF.

155–162 provides a ligand contact to ADP; the sequence is GVSRSGKT.

The protein belongs to the pyruvate, phosphate/water dikinase regulatory protein family. PSRP subfamily.

The enzyme catalyses [pyruvate, water dikinase] + ADP = [pyruvate, water dikinase]-phosphate + AMP + H(+). It carries out the reaction [pyruvate, water dikinase]-phosphate + phosphate + H(+) = [pyruvate, water dikinase] + diphosphate. Its function is as follows. Bifunctional serine/threonine kinase and phosphorylase involved in the regulation of the phosphoenolpyruvate synthase (PEPS) by catalyzing its phosphorylation/dephosphorylation. This is Putative phosphoenolpyruvate synthase regulatory protein from Laribacter hongkongensis (strain HLHK9).